The sequence spans 478 residues: tRNA (guanine-N(7)-)-methyltransferase non-catalytic subunit TRM82 (478 aa).

WD repeat units lie at residues 14 to 53, 73 to 113, 217 to 258, and 263 to 301; these read SSADGAAWTLFGASGSKIVVQSSNGVASVWSRQAVQVLDP, EQKF…GLQQ, GHVS…HIIE, and GHEEFVSRLCVTRSGLLVSGGGDAHLLVWDWRNFLLNEK.

Belongs to the WD repeat TRM82 family. In terms of assembly, forms a heterodimer with the catalytic subunit TRM8.

The protein localises to the nucleus. It participates in tRNA modification; N(7)-methylguanine-tRNA biosynthesis. Its function is as follows. Required for the formation of N(7)-methylguanine at position 46 (m7G46) in tRNA. In the complex, it is required to stabilize and induce conformational changes of the catalytic subunit. This chain is tRNA (guanine-N(7)-)-methyltransferase non-catalytic subunit TRM82, found in Phaeosphaeria nodorum (strain SN15 / ATCC MYA-4574 / FGSC 10173) (Glume blotch fungus).